The chain runs to 177 residues: Transcription antitermination protein NusB (177 aa).

A disordered region spans residues 1-36; that stretch reads MTEQPTKPTGSRPPRQPRTGLTSTGARKAGSKSDRS.

Belongs to the NusB family.

Its function is as follows. Involved in transcription antitermination. Required for transcription of ribosomal RNA (rRNA) genes. Binds specifically to the boxA antiterminator sequence of the ribosomal RNA (rrn) operons. This Albidiferax ferrireducens (strain ATCC BAA-621 / DSM 15236 / T118) (Rhodoferax ferrireducens) protein is Transcription antitermination protein NusB.